The following is a 308-amino-acid chain: 4-diphosphocytidyl-2-C-methyl-D-erythritol kinase (308 aa).

K24 is an active-site residue. 118–128 (PVGAGMAGGSA) lines the ATP pocket. D160 is a catalytic residue.

It belongs to the GHMP kinase family. IspE subfamily.

It carries out the reaction 4-CDP-2-C-methyl-D-erythritol + ATP = 4-CDP-2-C-methyl-D-erythritol 2-phosphate + ADP + H(+). Its pathway is isoprenoid biosynthesis; isopentenyl diphosphate biosynthesis via DXP pathway; isopentenyl diphosphate from 1-deoxy-D-xylulose 5-phosphate: step 3/6. In terms of biological role, catalyzes the phosphorylation of the position 2 hydroxy group of 4-diphosphocytidyl-2C-methyl-D-erythritol. The protein is 4-diphosphocytidyl-2-C-methyl-D-erythritol kinase of Bifidobacterium adolescentis (strain ATCC 15703 / DSM 20083 / NCTC 11814 / E194a).